Consider the following 235-residue polypeptide: Bypass of stop codon protein 2 (235 aa).

A helical membrane pass occupies residues 68 to 88 (FGIFQLMCSLGVIVLLLPIII). S177 is modified (phosphoserine).

The protein resides in the lipid droplet. It is found in the membrane. This Saccharomyces cerevisiae (strain ATCC 204508 / S288c) (Baker's yeast) protein is Bypass of stop codon protein 2 (BSC2).